A 111-amino-acid chain; its full sequence is uncharacterized protein (111 aa).

Residues 4-51 adopt a coiled-coil conformation; the sequence is LGQVKVLEEKVAKAVHLVQMLKEENAALRAEIDGRGKRITELEQLVLX.

This is an uncharacterized protein from Treponema pallidum (strain Nichols).